A 319-amino-acid chain; its full sequence is Lipoyl synthase (319 aa).

The segment at 5 to 31 (LDTISANPVRPRHPEKANRPDALSPPK) is disordered. [4Fe-4S] cluster-binding residues include cysteine 61, cysteine 66, cysteine 72, cysteine 87, cysteine 91, cysteine 94, and serine 300. The Radical SAM core domain occupies 73-289 (WDKKHATFMI…ETVAYTKGFL (217 aa)).

This sequence belongs to the radical SAM superfamily. Lipoyl synthase family. Requires [4Fe-4S] cluster as cofactor.

It localises to the cytoplasm. It carries out the reaction [[Fe-S] cluster scaffold protein carrying a second [4Fe-4S](2+) cluster] + N(6)-octanoyl-L-lysyl-[protein] + 2 oxidized [2Fe-2S]-[ferredoxin] + 2 S-adenosyl-L-methionine + 4 H(+) = [[Fe-S] cluster scaffold protein] + N(6)-[(R)-dihydrolipoyl]-L-lysyl-[protein] + 4 Fe(3+) + 2 hydrogen sulfide + 2 5'-deoxyadenosine + 2 L-methionine + 2 reduced [2Fe-2S]-[ferredoxin]. The protein operates within protein modification; protein lipoylation via endogenous pathway; protein N(6)-(lipoyl)lysine from octanoyl-[acyl-carrier-protein]: step 2/2. Its function is as follows. Catalyzes the radical-mediated insertion of two sulfur atoms into the C-6 and C-8 positions of the octanoyl moiety bound to the lipoyl domains of lipoate-dependent enzymes, thereby converting the octanoylated domains into lipoylated derivatives. The chain is Lipoyl synthase from Nitrobacter winogradskyi (strain ATCC 25391 / DSM 10237 / CIP 104748 / NCIMB 11846 / Nb-255).